Reading from the N-terminus, the 452-residue chain is UPF0210 protein Csac_1314 (452 aa).

The protein belongs to the UPF0210 family. Homodimer.

The polypeptide is UPF0210 protein Csac_1314 (Caldicellulosiruptor saccharolyticus (strain ATCC 43494 / DSM 8903 / Tp8T 6331)).